Reading from the N-terminus, the 182-residue chain is ATP-dependent protease subunit HslV (182 aa).

The active site involves T10. 3 residues coordinate Na(+): A166, C169, and S172.

Belongs to the peptidase T1B family. HslV subfamily. In terms of assembly, a double ring-shaped homohexamer of HslV is capped on each side by a ring-shaped HslU homohexamer. The assembly of the HslU/HslV complex is dependent on binding of ATP.

Its subcellular location is the cytoplasm. It catalyses the reaction ATP-dependent cleavage of peptide bonds with broad specificity.. Allosterically activated by HslU binding. Protease subunit of a proteasome-like degradation complex believed to be a general protein degrading machinery. The chain is ATP-dependent protease subunit HslV from Rickettsia prowazekii (strain Madrid E).